The following is a 326-amino-acid chain: Dipeptide transport ATP-binding protein DppD (326 aa).

The 251-residue stretch at 5-255 folds into the ABC transporter domain; sequence IRVEDLRAVY…PLHPYTRGLI (251 aa). ATP is bound by residues 44-49, N61, and Q97; that span reads ASGKST. 4 residues coordinate [4Fe-4S] cluster: C285, C291, C298, and C316.

This sequence belongs to the ABC transporter superfamily.

It is found in the cell membrane. The enzyme catalyses a dipeptide(out) + ATP + H2O = a dipeptide(in) + ADP + phosphate + H(+). With respect to regulation, the C-terminal iron-sulfur cluster may stabilize the structure of the C-terminal loops and may function in the regulation of the transport process. Part of the ABC transporter Dpp involved in dipeptide transport. Responsible for energy coupling to the transport system. In Caldanaerobacter subterraneus subsp. tengcongensis (strain DSM 15242 / JCM 11007 / NBRC 100824 / MB4) (Thermoanaerobacter tengcongensis), this protein is Dipeptide transport ATP-binding protein DppD.